Reading from the N-terminus, the 230-residue chain is Flavin-dependent thymidylate synthase (230 aa).

The 217-residue stretch at 1-217 (MEIKVLEKGF…PVTYEAFLNF (217 aa)) folds into the ThyX domain. Residues S55, 78–80 (RHR), and E86 contribute to the FAD site. DUMP is bound by residues 75-78 (QLVR), 86-90 (ERSGR), and R156. The ThyX motif motif lies at 78 to 88 (RHRIASINERS). Residues 172–174 (NAR) and N178 contribute to the FAD site. R183 is a binding site for dUMP. The active-site Involved in ionization of N3 of dUMP, leading to its activation is R183.

This sequence belongs to the thymidylate synthase ThyX family. In terms of assembly, homotetramer. Requires FAD as cofactor.

The enzyme catalyses dUMP + (6R)-5,10-methylene-5,6,7,8-tetrahydrofolate + NADPH + H(+) = dTMP + (6S)-5,6,7,8-tetrahydrofolate + NADP(+). It participates in pyrimidine metabolism; dTTP biosynthesis. In terms of biological role, catalyzes the reductive methylation of 2'-deoxyuridine-5'-monophosphate (dUMP) to 2'-deoxythymidine-5'-monophosphate (dTMP) while utilizing 5,10-methylenetetrahydrofolate (mTHF) as the methyl donor, and NADPH and FADH(2) as the reductant. The polypeptide is Flavin-dependent thymidylate synthase (Kosmotoga olearia (strain ATCC BAA-1733 / DSM 21960 / TBF 19.5.1)).